A 537-amino-acid polypeptide reads, in one-letter code: Mitochondria-eating protein (537 aa).

Residues 1-270 (MAESLKKLAK…SHSRSRSHSR (270 aa)) are interaction with YWHAG/14-3-3 protein gamma. Phosphoserine occurs at positions 13, 85, 123, 127, 154, and 157. The segment at 109–150 (SKNRDNSPDQDQHQSDNESFSETQPTQVQDDLAESGKSLEGA) is disordered. The segment covering 110–124 (KNRDNSPDQDQHQSD) has biased composition (basic and acidic residues). Polar residues predominate over residues 125–137 (NESFSETQPTQVQ). 2 coiled-coil regions span residues 152 to 184 (NGST…ARHK) and 210 to 243 (QDVV…RSAR). Disordered regions lie at residues 171–212 (QLKS…PQDV) and 233–291 (EKSG…RAKM). Positions 179–209 (EDARHKTSENRRSEALKSDHRSTKRTQDQRP) are enriched in basic and acidic residues. Over residues 239–251 (GRSARSPSPSTGT) the composition is skewed to low complexity. The span at 252–269 (RSHRRGRSRSHSRSRSHS) shows a compositional bias: basic residues. Ser-283, Ser-285, and Ser-508 each carry phosphoserine.

It belongs to the MIEAP family. As to quaternary structure, interacts (via coiled-coil domains) with BNIP3L (via BH3 domain). Interacts (via coiled-coil domains) with BNIP3 (via BH3 domain). Interacts with YWHAG/14-3-3 protein gamma; a protein that also plays a role in MALM. As to expression, in testis, expressed primarily in spermatids.

It is found in the cytoplasm. Its subcellular location is the cytosol. The protein localises to the mitochondrion outer membrane. The protein resides in the mitochondrion matrix. Key regulator of mitochondrial quality that mediates the repairing or degradation of unhealthy mitochondria in response to mitochondrial damage. Mediator of mitochondrial protein catabolic process (also named MALM) by mediating the degradation of damaged proteins inside mitochondria by promoting the accumulation in the mitochondrial matrix of hydrolases that are characteristic of the lysosomal lumen. Also involved in mitochondrion degradation of damaged mitochondria by promoting the formation of vacuole-like structures (named MIV), which engulf and degrade unhealthy mitochondria by accumulating lysosomes. The physical interaction of SPATA18/MIEAP, BNIP3 and BNIP3L/NIX at the mitochondrial outer membrane regulates the opening of a pore in the mitochondrial double membrane in order to mediate the translocation of lysosomal proteins from the cytoplasm to the mitochondrial matrix. Binds cardiolipin. May form molecular condensates (non-membrane-bounded organelles) within mitochondria that compartmentalize and promote cardiolipin metabolism. The chain is Mitochondria-eating protein (Spata18) from Mus musculus (Mouse).